We begin with the raw amino-acid sequence, 480 residues long: Protein nucleotidyltransferase YdiU (480 aa).

The ATP site is built by Gly84, Gly86, Arg87, Lys107, Asp119, Gly120, Arg170, and Arg177. The Proton acceptor role is filled by Asp246. Asn247 and Asp256 together coordinate Mg(2+). ATP is bound at residue Asp256.

This sequence belongs to the SELO family. It depends on Mg(2+) as a cofactor. Requires Mn(2+) as cofactor.

It catalyses the reaction L-seryl-[protein] + ATP = 3-O-(5'-adenylyl)-L-seryl-[protein] + diphosphate. The catalysed reaction is L-threonyl-[protein] + ATP = 3-O-(5'-adenylyl)-L-threonyl-[protein] + diphosphate. It carries out the reaction L-tyrosyl-[protein] + ATP = O-(5'-adenylyl)-L-tyrosyl-[protein] + diphosphate. The enzyme catalyses L-histidyl-[protein] + UTP = N(tele)-(5'-uridylyl)-L-histidyl-[protein] + diphosphate. It catalyses the reaction L-seryl-[protein] + UTP = O-(5'-uridylyl)-L-seryl-[protein] + diphosphate. The catalysed reaction is L-tyrosyl-[protein] + UTP = O-(5'-uridylyl)-L-tyrosyl-[protein] + diphosphate. Its function is as follows. Nucleotidyltransferase involved in the post-translational modification of proteins. It can catalyze the addition of adenosine monophosphate (AMP) or uridine monophosphate (UMP) to a protein, resulting in modifications known as AMPylation and UMPylation. The sequence is that of Protein nucleotidyltransferase YdiU from Pseudoalteromonas atlantica (strain T6c / ATCC BAA-1087).